A 67-amino-acid polypeptide reads, in one-letter code: DNA-directed RNA polymerase subunit omega (67 aa).

Belongs to the RNA polymerase subunit omega family. As to quaternary structure, the RNAP catalytic core consists of 2 alpha, 1 beta, 1 beta' and 1 omega subunit. When a sigma factor is associated with the core the holoenzyme is formed, which can initiate transcription.

It carries out the reaction RNA(n) + a ribonucleoside 5'-triphosphate = RNA(n+1) + diphosphate. Functionally, promotes RNA polymerase assembly. Latches the N- and C-terminal regions of the beta' subunit thereby facilitating its interaction with the beta and alpha subunits. This Listeria monocytogenes serotype 4a (strain HCC23) protein is DNA-directed RNA polymerase subunit omega.